The following is a 486-amino-acid chain: tRNA sulfurtransferase (486 aa).

Residues Ala61 to Arg165 form the THUMP domain. ATP contacts are provided by residues Leu183–Ile184, Lys265, Gly287, and Gln296. Residues Cys344 and Cys456 are joined by a disulfide bond. One can recognise a Rhodanese domain in the interval Leu404–Ala481. Cys456 acts as the Cysteine persulfide intermediate in catalysis.

Belongs to the ThiI family.

It is found in the cytoplasm. It carries out the reaction [ThiI sulfur-carrier protein]-S-sulfanyl-L-cysteine + a uridine in tRNA + 2 reduced [2Fe-2S]-[ferredoxin] + ATP + H(+) = [ThiI sulfur-carrier protein]-L-cysteine + a 4-thiouridine in tRNA + 2 oxidized [2Fe-2S]-[ferredoxin] + AMP + diphosphate. The catalysed reaction is [ThiS sulfur-carrier protein]-C-terminal Gly-Gly-AMP + S-sulfanyl-L-cysteinyl-[cysteine desulfurase] + AH2 = [ThiS sulfur-carrier protein]-C-terminal-Gly-aminoethanethioate + L-cysteinyl-[cysteine desulfurase] + A + AMP + 2 H(+). It functions in the pathway cofactor biosynthesis; thiamine diphosphate biosynthesis. Functionally, catalyzes the ATP-dependent transfer of a sulfur to tRNA to produce 4-thiouridine in position 8 of tRNAs, which functions as a near-UV photosensor. Also catalyzes the transfer of sulfur to the sulfur carrier protein ThiS, forming ThiS-thiocarboxylate. This is a step in the synthesis of thiazole, in the thiamine biosynthesis pathway. The sulfur is donated as persulfide by IscS. The sequence is that of tRNA sulfurtransferase from Mannheimia succiniciproducens (strain KCTC 0769BP / MBEL55E).